Reading from the N-terminus, the 95-residue chain is Aspartyl/glutamyl-tRNA(Asn/Gln) amidotransferase subunit C (95 aa).

The protein belongs to the GatC family. In terms of assembly, heterotrimer of A, B and C subunits.

The enzyme catalyses L-glutamyl-tRNA(Gln) + L-glutamine + ATP + H2O = L-glutaminyl-tRNA(Gln) + L-glutamate + ADP + phosphate + H(+). The catalysed reaction is L-aspartyl-tRNA(Asn) + L-glutamine + ATP + H2O = L-asparaginyl-tRNA(Asn) + L-glutamate + ADP + phosphate + 2 H(+). Allows the formation of correctly charged Asn-tRNA(Asn) or Gln-tRNA(Gln) through the transamidation of misacylated Asp-tRNA(Asn) or Glu-tRNA(Gln) in organisms which lack either or both of asparaginyl-tRNA or glutaminyl-tRNA synthetases. The reaction takes place in the presence of glutamine and ATP through an activated phospho-Asp-tRNA(Asn) or phospho-Glu-tRNA(Gln). The chain is Aspartyl/glutamyl-tRNA(Asn/Gln) amidotransferase subunit C from Rhizobium rhizogenes (strain K84 / ATCC BAA-868) (Agrobacterium radiobacter).